A 422-amino-acid chain; its full sequence is Serine hydroxymethyltransferase (422 aa).

(6S)-5,6,7,8-tetrahydrofolate is bound by residues L118 and G122–L124. Position 227 is an N6-(pyridoxal phosphate)lysine (K227). Residue E242 participates in (6S)-5,6,7,8-tetrahydrofolate binding.

This sequence belongs to the SHMT family. In terms of assembly, homodimer. Pyridoxal 5'-phosphate serves as cofactor.

The protein resides in the cytoplasm. The catalysed reaction is (6R)-5,10-methylene-5,6,7,8-tetrahydrofolate + glycine + H2O = (6S)-5,6,7,8-tetrahydrofolate + L-serine. It participates in one-carbon metabolism; tetrahydrofolate interconversion. The protein operates within amino-acid biosynthesis; glycine biosynthesis; glycine from L-serine: step 1/1. In terms of biological role, catalyzes the reversible interconversion of serine and glycine with tetrahydrofolate (THF) serving as the one-carbon carrier. This reaction serves as the major source of one-carbon groups required for the biosynthesis of purines, thymidylate, methionine, and other important biomolecules. Also exhibits THF-independent aldolase activity toward beta-hydroxyamino acids, producing glycine and aldehydes, via a retro-aldol mechanism. The chain is Serine hydroxymethyltransferase from Sulfurihydrogenibium sp. (strain YO3AOP1).